The chain runs to 338 residues: m7GpppX diphosphatase (338 aa).

Residues 1–36 (MADTAPQLKRKREQEAEEAETPSTEEKEAGVGNGTS) are disordered. An N-acetylalanine modification is found at A2. Positions 9–12 (KRKR) match the nuclear localization signal (NLS) motif. 2 positions are modified to phosphoserine: S23 and S100. 2 positions are modified to N6-acetyllysine: K137 and K141. The nuclear export sequence (NES) motif lies at 141–153 (KYMRQDLRLIRET). Residues W174, E184, D204, K206, and 267–278 (HYLPSYYHLHVH) each bind substrate. The Histidine triad motif signature appears at 274–278 (HLHVH). H276 (nucleophile) is an active-site residue.

This sequence belongs to the HIT family. In terms of assembly, homodimer. Associates with components of the exosome multienzyme ribonuclease complex, such as EXOSC3 and EXOSC4. Interacts with NDOR1.

It is found in the cytoplasm. It localises to the nucleus. The enzyme catalyses a 5'-end (N(7)-methyl 5'-triphosphoguanosine)-ribonucleoside in mRNA + H2O = N(7)-methyl-GMP + a 5'-end diphospho-ribonucleoside in mRNA + 2 H(+). With respect to regulation, the hydrolytic product 7-methylguanosine diphosphate (m7GDP) efficiently inhibits the decapping scavenger activity and acts as a competitive inhibitor in vitro. Inhibited by 2,4-diaminoquinazoline. Decapping scavenger enzyme that catalyzes the cleavage of a residual cap structure following the degradation of mRNAs by the 3'-&gt;5' exosome-mediated mRNA decay pathway. Hydrolyzes cap analog structures like 7-methylguanosine nucleoside triphosphate (m7GpppG) with up to 10 nucleotide substrates (small capped oligoribonucleotides) and specifically releases 5'-phosphorylated RNA fragments and 7-methylguanosine monophosphate (m7GMP). Cleaves cap analog structures like tri-methyl guanosine nucleoside triphosphate (m3(2,2,7)GpppG) with very poor efficiency. Does not hydrolyze unmethylated cap analog (GpppG) and shows no decapping activity on intact m7GpppG-capped mRNA molecules longer than 25 nucleotides. Does not hydrolyze 7-methylguanosine diphosphate (m7GDP) to m7GMP. May also play a role in the 5'-&gt;3 mRNA decay pathway; m7GDP, the downstream product released by the 5'-&gt;3' mRNA mediated decapping activity, may be also converted by DCPS to m7GMP. Binds to m7GpppG and strongly to m7GDP. Plays a role in first intron splicing of pre-mRNAs. Inhibits activation-induced cell death. In Mus musculus (Mouse), this protein is m7GpppX diphosphatase (Dcps).